The chain runs to 154 residues: Low molecular weight protein-tyrosine-phosphatase PtpA (154 aa).

C8 acts as the Nucleophile in catalysis. R14 is a catalytic residue. D120 serves as the catalytic Proton donor.

The protein belongs to the low molecular weight phosphotyrosine protein phosphatase family. Interacts with host CORO1A. Post-translationally, phosphorylations at Tyr-122 and Tyr-123 are essential for phosphatase activity.

The protein localises to the secreted. The catalysed reaction is O-phospho-L-tyrosyl-[protein] + H2O = L-tyrosyl-[protein] + phosphate. Functionally, secreted tyrosine phosphatase that plays a critical role during infection as a bacterial effector protein that counteracts host defenses. Required for intramacrophage survival. This Staphylococcus aureus (strain MSSA476) protein is Low molecular weight protein-tyrosine-phosphatase PtpA (ptpA).